The primary structure comprises 345 residues: Phosphoribosylformylglycinamidine cyclo-ligase (345 aa).

Belongs to the AIR synthase family.

The protein resides in the cytoplasm. The catalysed reaction is 2-formamido-N(1)-(5-O-phospho-beta-D-ribosyl)acetamidine + ATP = 5-amino-1-(5-phospho-beta-D-ribosyl)imidazole + ADP + phosphate + H(+). It functions in the pathway purine metabolism; IMP biosynthesis via de novo pathway; 5-amino-1-(5-phospho-D-ribosyl)imidazole from N(2)-formyl-N(1)-(5-phospho-D-ribosyl)glycinamide: step 2/2. The protein is Phosphoribosylformylglycinamidine cyclo-ligase of Synechococcus sp. (strain CC9902).